A 270-amino-acid polypeptide reads, in one-letter code: Phosphatidylglycerol--prolipoprotein diacylglyceryl transferase (270 aa).

4 helical membrane-spanning segments follow: residues 19-39 (FPVY…LWLA), 56-76 (LVLI…VIFE), 92-112 (QGGL…VLFA), and 116-136 (GVSF…GQAI). R138 provides a ligand contact to a 1,2-diacyl-sn-glycero-3-phospho-(1'-sn-glycerol). A run of 3 helical transmembrane segments spans residues 178-198 (HPTF…LLAL), 206-226 (GELF…VEGL), and 236-256 (LRIA…FIIV).

It belongs to the Lgt family.

The protein resides in the cell membrane. The catalysed reaction is L-cysteinyl-[prolipoprotein] + a 1,2-diacyl-sn-glycero-3-phospho-(1'-sn-glycerol) = an S-1,2-diacyl-sn-glyceryl-L-cysteinyl-[prolipoprotein] + sn-glycerol 1-phosphate + H(+). Its pathway is protein modification; lipoprotein biosynthesis (diacylglyceryl transfer). In terms of biological role, catalyzes the transfer of the diacylglyceryl group from phosphatidylglycerol to the sulfhydryl group of the N-terminal cysteine of a prolipoprotein, the first step in the formation of mature lipoproteins. This chain is Phosphatidylglycerol--prolipoprotein diacylglyceryl transferase, found in Bacillus cereus (strain B4264).